The chain runs to 550 residues: Hydroxylamine reductase (550 aa).

Positions 3, 6, 18, and 25 each coordinate [2Fe-2S] cluster. The hybrid [4Fe-2O-2S] cluster site is built by H249, E273, C317, C405, C433, C458, E492, and K494. The residue at position 405 (C405) is a Cysteine persulfide.

It belongs to the HCP family. Requires [2Fe-2S] cluster as cofactor. Hybrid [4Fe-2O-2S] cluster is required as a cofactor.

It is found in the cytoplasm. It carries out the reaction A + NH4(+) + H2O = hydroxylamine + AH2 + H(+). Its function is as follows. Catalyzes the reduction of hydroxylamine to form NH(3) and H(2)O. In Salmonella typhi, this protein is Hydroxylamine reductase.